The primary structure comprises 322 residues: Fructose-1,6-bisphosphatase class 1 1 (322 aa).

Glutamate 84, aspartate 103, leucine 105, and aspartate 106 together coordinate Mg(2+). Substrate-binding positions include 106 to 109, asparagine 198, and lysine 264; that span reads DGSS. Glutamate 270 serves as a coordination point for Mg(2+).

Belongs to the FBPase class 1 family. Homotetramer. Mg(2+) serves as cofactor.

The protein resides in the cytoplasm. The enzyme catalyses beta-D-fructose 1,6-bisphosphate + H2O = beta-D-fructose 6-phosphate + phosphate. It functions in the pathway carbohydrate biosynthesis; gluconeogenesis. The sequence is that of Fructose-1,6-bisphosphatase class 1 1 from Pseudoalteromonas translucida (strain TAC 125).